The following is a 306-amino-acid chain: Bifunctional protein FolD 2 (306 aa).

NADP(+)-binding positions include 169–171 (GHS) and isoleucine 235.

The protein belongs to the tetrahydrofolate dehydrogenase/cyclohydrolase family. As to quaternary structure, homodimer.

It carries out the reaction (6R)-5,10-methylene-5,6,7,8-tetrahydrofolate + NADP(+) = (6R)-5,10-methenyltetrahydrofolate + NADPH. It catalyses the reaction (6R)-5,10-methenyltetrahydrofolate + H2O = (6R)-10-formyltetrahydrofolate + H(+). It functions in the pathway one-carbon metabolism; tetrahydrofolate interconversion. Catalyzes the oxidation of 5,10-methylenetetrahydrofolate to 5,10-methenyltetrahydrofolate and then the hydrolysis of 5,10-methenyltetrahydrofolate to 10-formyltetrahydrofolate. The protein is Bifunctional protein FolD 2 of Mesorhizobium japonicum (strain LMG 29417 / CECT 9101 / MAFF 303099) (Mesorhizobium loti (strain MAFF 303099)).